A 53-amino-acid polypeptide reads, in one-letter code: uncharacterized protein (53 aa).

Residues 28-45 (AIVFSLAVFGIVEAYYYW) form a helical membrane-spanning segment.

Its subcellular location is the host membrane. This is an uncharacterized protein from Acidianus convivator (ABV).